A 308-amino-acid polypeptide reads, in one-letter code: tRNA dimethylallyltransferase (308 aa).

Residue 19–26 participates in ATP binding; it reads GPTASGKS. Position 21–26 (21–26) interacts with substrate; that stretch reads TASGKS. Residues 44–47 are interaction with substrate tRNA; the sequence is DSMQ.

Belongs to the IPP transferase family. In terms of assembly, monomer. Mg(2+) is required as a cofactor.

The catalysed reaction is adenosine(37) in tRNA + dimethylallyl diphosphate = N(6)-dimethylallyladenosine(37) in tRNA + diphosphate. In terms of biological role, catalyzes the transfer of a dimethylallyl group onto the adenine at position 37 in tRNAs that read codons beginning with uridine, leading to the formation of N6-(dimethylallyl)adenosine (i(6)A). The sequence is that of tRNA dimethylallyltransferase from Methylobacterium radiotolerans (strain ATCC 27329 / DSM 1819 / JCM 2831 / NBRC 15690 / NCIMB 10815 / 0-1).